A 449-amino-acid chain; its full sequence is Required for meiotic nuclear division protein 1 homolog (449 aa).

The transit peptide at 1–12 (MPATLLRAVARS) directs the protein to the mitochondrion.

The protein belongs to the RMD1/sif2 family. In terms of assembly, homooligomer.

Its subcellular location is the mitochondrion. In terms of biological role, required for mitochondrial translation, possibly by coordinating the assembly or maintenance of the mitochondrial ribosome. The polypeptide is Required for meiotic nuclear division protein 1 homolog (RMND1) (Homo sapiens (Human)).